The sequence spans 350 residues: Cytosolic sulfotransferase 18 (350 aa).

An N-acetylmethionine modification is found at Met-1. A compositionally biased stretch (low complexity) spans Met-1–Leu-17. Positions Met-1–Thr-28 are disordered. The segment covering Ser-19–Thr-28 has biased composition (basic and acidic residues). Residue Lys-93 to Trp-98 coordinates 3'-phosphoadenylyl sulfate. The active-site Proton acceptor is His-155. 3'-phosphoadenylyl sulfate contacts are provided by residues Arg-177, Ser-185, Tyr-243, and Arg-313 to Gly-315.

Belongs to the sulfotransferase 1 family. Expressed in roots, leaves and stems. Barely detected in siliques and flowers.

It localises to the cytoplasm. The catalysed reaction is an aliphatic (Z)-desulfo-glucosinolate + 3'-phosphoadenylyl sulfate = a (Z)-omega-(methylsulfanyl)-N-sulfo-alkylhydroximate S-glucoside + adenosine 3',5'-bisphosphate + H(+). With respect to regulation, inhibited by phosphoadenosine 5'-phosphate (PAP). In terms of biological role, sulfotransferase that utilizes 3'-phospho-5'-adenylyl sulfate (PAPS) as sulfonate donor to catalyze the sulfate conjugation of desulfo-glucosinolates (dsGSs), the final step in the biosynthesis of the glucosinolate core structure. Preferred substrate are the long-chain desulfo-glucosinolates, 7-methylthioheptyl and 8-methylthiooctyl, derived from methionine. Substrate preference is desulfo-benzyl glucosinolate &gt; desulfo-4-methylthiobutyl glucosinolate &gt; desulfo-6-methylthiohexyl glucosinolate &gt; desulfo-3-methylthiopropyl glucosinolate &gt; desulfo-indol-3-yl methyl glucosinolate &gt; desulfo-singrin &gt; desulfo-3-butenyl glucosinolate. This Arabidopsis thaliana (Mouse-ear cress) protein is Cytosolic sulfotransferase 18 (SOT18).